Consider the following 429-residue polypeptide: MIESERKQIIDLIKKEVIPAIGCTEPIAVALCVAKAAETLGMKPEKIEVLLSANILKNAMGVGIPGTDMVGLPIAVALGALIGRSEYQLEVLRDCTPEAVEQGKLFIAEKRICISLKEDITEKLYIEVICTAGSQKATAVIAGGHTTFVYIATDEKVLLDKQQTANEEEEDASLELNLRKVYDFALTSPLDEIRFILDTARLNKAAAEQAFKGNYGHSLGKMLRGTYEHKVMGDSVFSHILSYTSAACDARMAGAMIPVMSNSGSGNQGISATLPVVVFAEENGKTEEELIRALMLSHLTVIYIKQSLGRLSALCGCVVAATGSSCGITWLMGGNYNQVAFAVQNMIANLTGMICDGAKPSCALKVTTGVSTAVLSAMMAMEDRCVTSVEGIIDEDVDQSIRNLTRIGSQAMNETDKMVLDIMTHKGGC.

This sequence belongs to the UPF0597 family.

The sequence is that of UPF0597 protein BT_2080 from Bacteroides thetaiotaomicron (strain ATCC 29148 / DSM 2079 / JCM 5827 / CCUG 10774 / NCTC 10582 / VPI-5482 / E50).